A 456-amino-acid chain; its full sequence is RuvB-like helicase 1 (456 aa).

70–77 provides a ligand contact to ATP; that stretch reads GPPGTGKT.

Belongs to the RuvB family. As to quaternary structure, forms homohexameric rings. May form a dodecamer with rept made of two stacked hexameric rings. Component of the chromatin remodeling Ino80 complex. Interacts with Myc and rept. In terms of tissue distribution, higher expression occurs in primordia of mesoderm, anterior and posterior midgut and cephalic furrow early in gastrulation, as well as in endoderm and mesoderm lineages during germ band extension. Later in development expression is only maintained in endoderm cells. Expressed in thoracic and abdominal segment neural precursors of all embryonic chordotonal organs.

The protein localises to the nucleus. It carries out the reaction ATP + H2O = ADP + phosphate + H(+). Its function is as follows. Acts as a transcriptional coactivator in Wg signaling caused by altered arm signaling. Pont and rept interfere antagonistically with nuclear arm signaling function, and are required to enhance or reduce arm activity, respectively. Also an essential cofactor for the normal function of Myc; required for cellular proliferation and growth. Proposed core component of the chromatin remodeling Ino80 complex which is involved in transcriptional regulation, DNA replication and probably DNA repair. In Drosophila melanogaster (Fruit fly), this protein is RuvB-like helicase 1.